A 367-amino-acid chain; its full sequence is Cyclin-D3-2 (367 aa).

A compositionally biased stretch (low complexity) spans 324–335; sequence STTASVSSSSSS. The segment at 324–347 is disordered; the sequence is STTASVSSSSSSPEPLLKRRRVQE.

The protein belongs to the cyclin family. Cyclin D subfamily. In terms of assembly, interacts with CDKA-1. In terms of tissue distribution, expressed in developing vegetative and floral primordia.

Its function is as follows. Promotes divisions in the guard cells (GCs) after the guard mother cells (GMC) symmetric division when in the presence of CDKA-1. This chain is Cyclin-D3-2 (CYCD3-2), found in Arabidopsis thaliana (Mouse-ear cress).